Reading from the N-terminus, the 305-residue chain is Epoxyqueuosine reductase (305 aa).

The Proton donor role is filled by aspartate 128. The region spanning 170–202 (LSLTSDTPHAKYCGTCRKCLDICPTKAIVHPFV) is the 4Fe-4S ferredoxin-type domain. Residues cysteine 182, cysteine 185, cysteine 188, cysteine 192, cysteine 208, cysteine 236, cysteine 239, and cysteine 243 each contribute to the [4Fe-4S] cluster site.

The protein belongs to the QueG family. In terms of assembly, monomer. The cofactor is cob(II)alamin. Requires [4Fe-4S] cluster as cofactor.

The protein resides in the cytoplasm. The catalysed reaction is epoxyqueuosine(34) in tRNA + AH2 = queuosine(34) in tRNA + A + H2O. It participates in tRNA modification; tRNA-queuosine biosynthesis. Its function is as follows. Catalyzes the conversion of epoxyqueuosine (oQ) to queuosine (Q), which is a hypermodified base found in the wobble positions of tRNA(Asp), tRNA(Asn), tRNA(His) and tRNA(Tyr). This chain is Epoxyqueuosine reductase, found in Atelocyanobacterium thalassa (isolate ALOHA).